We begin with the raw amino-acid sequence, 300 residues long: Haloalkane dehalogenase 1 (300 aa).

The 130-residue stretch at 47–176 (PPIVLLHGEP…FARYSPVLPA (130 aa)) folds into the AB hydrolase-1 domain. D123 serves as the catalytic Nucleophile. D250 functions as the Proton donor in the catalytic mechanism. H279 serves as the catalytic Proton acceptor.

The protein belongs to the haloalkane dehalogenase family. Type 1 subfamily. In terms of assembly, monomer.

The catalysed reaction is 1-haloalkane + H2O = a halide anion + a primary alcohol + H(+). Catalyzes hydrolytic cleavage of carbon-halogen bonds in halogenated aliphatic compounds, leading to the formation of the corresponding primary alcohols, halide ions and protons. This Mycobacterium bovis (strain ATCC BAA-935 / AF2122/97) protein is Haloalkane dehalogenase 1 (dhmA1).